The following is an 88-amino-acid chain: Sec-independent protein translocase protein TatA (88 aa).

Residues 4-24 (LSIWHWLIVLAVVLVLFVGGG) traverse the membrane as a helical segment. A disordered region spans residues 45-88 (ADDETMEGSTGSGGHIAPPGPAAGTVQRDASFSGTGRPSGSSTP). A compositionally biased stretch (low complexity) spans 75–88 (SFSGTGRPSGSSTP).

Belongs to the TatA/E family. The Tat system comprises two distinct complexes: a TatABC complex, containing multiple copies of TatA, TatB and TatC subunits, and a separate TatA complex, containing only TatA subunits. Substrates initially bind to the TatABC complex, which probably triggers association of the separate TatA complex to form the active translocon.

It is found in the cell inner membrane. Part of the twin-arginine translocation (Tat) system that transports large folded proteins containing a characteristic twin-arginine motif in their signal peptide across membranes. TatA could form the protein-conducting channel of the Tat system. The chain is Sec-independent protein translocase protein TatA from Gluconacetobacter diazotrophicus (strain ATCC 49037 / DSM 5601 / CCUG 37298 / CIP 103539 / LMG 7603 / PAl5).